The following is a 161-amino-acid chain: Large ribosomal subunit protein uL16 (161 aa).

Residues 140–161 form a disordered region; the sequence is LNKGNYKPAKTPVTADDSESSS.

Belongs to the universal ribosomal protein uL16 family. Part of the 50S ribosomal subunit.

Functionally, binds 23S rRNA and is also seen to make contacts with the A and possibly P site tRNAs. The sequence is that of Large ribosomal subunit protein uL16 from Prochlorococcus marinus (strain NATL2A).